A 1101-amino-acid chain; its full sequence is Protein diaphanous homolog 2 (1101 aa).

Residue Met-1 is modified to N-acetylmethionine. Residues 1–44 (MEQPGAAASGAGGGSEEPGGGRSNKRSAGNRAANEEETKNKPKL) form a disordered region. The span at 10-22 (GAGGGSEEPGGGR) shows a compositional bias: gly residues. In terms of domain architecture, GBD/FH3 spans 98-464 (SLNLSEKEVL…QIVLHCSGMD (367 aa)). Coiled-coil stretches lie at residues 366-418 (KEKE…MLKD) and 487-547 (KAKV…SSSG). Polar residues predominate over residues 536–546 (RTQAQVLSSSS). Disordered regions lie at residues 536 to 594 (RTQA…PPPP), 1010 to 1048 (NKRR…DINK), and 1070 to 1101 (RDRR…ISSK). The span at 549–594 (PGPPAAPPLPGVGPPPPPPAPPLPGGAPLPPPPPPLPGMMGIPPPP) shows a compositional bias: pro residues. The 75-residue stretch at 549-623 (PGPPAAPPLP…PPPGISLNLP (75 aa)) folds into the FH1 domain. In terms of domain architecture, FH2 spans 628 to 1028 (QKKMYKPEVS…TRRAKLAKEK (401 aa)). The stretch at 903–1053 (SASKVSAQIL…IDINKEGDET (151 aa)) forms a coiled coil. Composition is skewed to basic and acidic residues over residues 1010-1035 (NKRR…EKLE) and 1078-1090 (RNPD…LERS). A DAD domain is found at 1051 to 1081 (DETGVMDNLLEALQSGAAFRDRRKRIPRNPD).

It belongs to the formin homology family. Diaphanous subfamily. Isoform 3 interacts with RHOD in the GTP-bound form. In terms of tissue distribution, expressed in testis, ovary, small intestine, prostate, lung, liver, kidney and leukocytes.

It is found in the cytoplasm. It localises to the cytosol. The protein resides in the early endosome. In terms of biological role, could be involved in oogenesis. Involved in the regulation of endosome dynamics. Implicated in a novel signal transduction pathway, in which isoform 3 and CSK are sequentially activated by RHOD to regulate the motility of early endosomes through interactions with the actin cytoskeleton. The protein is Protein diaphanous homolog 2 (DIAPH2) of Homo sapiens (Human).